Reading from the N-terminus, the 271-residue chain is ATP synthase subunit a (271 aa).

5 helical membrane passes run 38-58 (FWTL…LFLV), 100-120 (LIAP…LMDL), 146-166 (DVNI…FYSI), 220-240 (LIFI…LNVP), and 242-262 (AIFH…LTIV).

Belongs to the ATPase A chain family. As to quaternary structure, F-type ATPases have 2 components, CF(1) - the catalytic core - and CF(0) - the membrane proton channel. CF(1) has five subunits: alpha(3), beta(3), gamma(1), delta(1), epsilon(1). CF(0) has three main subunits: a(1), b(2) and c(9-12). The alpha and beta chains form an alternating ring which encloses part of the gamma chain. CF(1) is attached to CF(0) by a central stalk formed by the gamma and epsilon chains, while a peripheral stalk is formed by the delta and b chains.

Its subcellular location is the cell inner membrane. Its function is as follows. Key component of the proton channel; it plays a direct role in the translocation of protons across the membrane. The sequence is that of ATP synthase subunit a from Salmonella arizonae (strain ATCC BAA-731 / CDC346-86 / RSK2980).